We begin with the raw amino-acid sequence, 321 residues long: Cytochrome c biogenesis protein CcsA (321 aa).

The next 8 helical transmembrane spans lie at 9–29 (ILTHISFSIVSIVITIYLMTL), 44–64 (GLIATFFCITGFLVIRWIYSG), 71–91 (LYESLMFLSWSFSIIHMVPYF), 97–117 (LLSTITAPSAIFTQGFATSGL), 143–163 (MILSYAALLCGSLLSIALLVI), 227–247 (VISLGFIFLTIGILSGAVWAN), 261–275 (TWAFITWTIFAIYLH), and 288–308 (AIVASIGFLIIWICYFGVNLL).

It belongs to the CcmF/CycK/Ccl1/NrfE/CcsA family. As to quaternary structure, may interact with Ccs1.

It is found in the plastid. The protein localises to the chloroplast thylakoid membrane. Functionally, required during biogenesis of c-type cytochromes (cytochrome c6 and cytochrome f) at the step of heme attachment. This chain is Cytochrome c biogenesis protein CcsA, found in Nandina domestica (Heavenly bamboo).